The sequence spans 386 residues: Succinate--CoA ligase [ADP-forming] subunit beta (386 aa).

Positions 9-244 (KEILRKYGVP…HDEEDPLETR (236 aa)) constitute an ATP-grasp domain. Residues lysine 46, 53–55 (GRG), glutamate 99, cysteine 102, and glutamate 107 each bind ATP. Mg(2+) contacts are provided by asparagine 199 and aspartate 213. Substrate-binding positions include asparagine 264 and 321-323 (GIM).

It belongs to the succinate/malate CoA ligase beta subunit family. Heterotetramer of two alpha and two beta subunits. Mg(2+) serves as cofactor.

It catalyses the reaction succinate + ATP + CoA = succinyl-CoA + ADP + phosphate. It carries out the reaction GTP + succinate + CoA = succinyl-CoA + GDP + phosphate. It functions in the pathway carbohydrate metabolism; tricarboxylic acid cycle; succinate from succinyl-CoA (ligase route): step 1/1. Its function is as follows. Succinyl-CoA synthetase functions in the citric acid cycle (TCA), coupling the hydrolysis of succinyl-CoA to the synthesis of either ATP or GTP and thus represents the only step of substrate-level phosphorylation in the TCA. The beta subunit provides nucleotide specificity of the enzyme and binds the substrate succinate, while the binding sites for coenzyme A and phosphate are found in the alpha subunit. The polypeptide is Succinate--CoA ligase [ADP-forming] subunit beta (Rickettsia akari (strain Hartford)).